The following is a 91-amino-acid chain: Bacterial microcompartment shell protein PduJ (91 aa).

The BMC domain maps to 4–88 (ALGLVETKGL…PHSDVEAILP (85 aa)).

The protein belongs to the bacterial microcompartments protein family. In terms of assembly, homohexamer with a central pore. Interacts with PduP, which targets PduP to the BMC. Interacts with shell protein PduA.

The protein localises to the bacterial microcompartment. It functions in the pathway polyol metabolism; 1,2-propanediol degradation. In terms of biological role, one of the major shell proteins of the bacterial microcompartment (BMC) dedicated to 1,2-propanediol (1,2-PD) degradation. At least one of PduA or PduJ is required for BMC assembly; it must be encoded as the first gene in the pdu operon. Required for structural integrity of BMCs and to mitigate propionaldehyde toxicity, probably joins facets responsible for BMC closure. Probably the hub for binding multiple enzymes to the interior of the BMC. Expression of a cosmid containing the full 21-gene pdu operon in E.coli allows E.coli to grow on 1,2-PD with the appearance of BMCs in its cytoplasm. Overexpression of this protein leads to an internal structure with a whorled architecture. Functionally, the 1,2-PD-specific bacterial microcompartment (BMC) concentrates low levels of 1,2-PD catabolic enzymes, concentrates volatile reaction intermediates thus enhancing pathway flux and keeps the level of toxic, mutagenic propionaldehyde low. In Citrobacter freundii, this protein is Bacterial microcompartment shell protein PduJ.